Reading from the N-terminus, the 398-residue chain is uncharacterized protein (398 aa).

The region spanning 235 to 351 is the CobW C-terminal domain; that stretch reads VAIVEFSARR…DIVNALNAAL (117 aa).

This is an uncharacterized protein from Mycobacterium bovis (strain ATCC BAA-935 / AF2122/97).